A 299-amino-acid polypeptide reads, in one-letter code: Non-structural protein V (299 aa).

Positions 40 to 98 (SDNPGQEQATCKEEEAGASGLSKPCLSAIGSTEGGAPRIRGQGSGESDDDTETLGFPSR) are disordered. Positions 110–120 (YYVYDHSGEAV) are interaction with host STAT1. The segment covering 134–145 (GLDGDSTLSGGD) has biased composition (low complexity). Disordered stretches follow at residues 134 to 174 (GLDG…APIS) and 204 to 230 (PKLG…PIKK). The span at 146–160 (NESENSDVDIGEPDT) shows a compositional bias: acidic residues. Zn(2+) is bound by residues H232, C251, C255, C267, C269, C272, C276, and C279.

This sequence belongs to the paramyxoviruses V protein family. In terms of assembly, interacts with host IFIH1/MDA5 and DHX58/LGP2; these interactions are involved in the inhibition of the host type I interferon signaling pathway. Interacts with host TYK2; this interaction inhibits the type I interferon signaling pathway without affecting the type II pathway. Interacts with host IRF7; this interaction inhibits IRF7 translocation to the nucleus. Interacts with host CHUK. Interacts with host RELA/p65; this interaction inhibits the nuclear translocation of NF-KappaB. Interacts (via N-terminus) with host STAT1 and JAK1; these interactions inhibit STAT1 phosphorylation by Jak1 and thereby the type I interferon signaling pathway. Interacts (via C-terminus) with host STAT2; this interaction is involved in the inhibition of the host type I interferon signaling pathway. Forms a complex with host PPP1CA and PPP1CC; this interaction prevents dephosphorylation of host IFIH1/MDA5 and leads to the inhibition of the host type I interferon signaling pathway. Interacts with host IRF9; this interaction prevents the binding of IRF9 to STAT2 and thereby the type I interferon signaling pathway. Interacts with host RIGI regulatory protein (via CARDs domain) and host TRIM25 (via SPRY domain); these interactions prevent TRIM25-mediated ubiquitination of RIG-I and disrupts downstream RIG-I signaling.

The protein localises to the host cytoplasm. Plays an essential role in the inhibition of host immune response. Prevents the establishment of cellular antiviral state by blocking interferon-alpha/beta (IFN-alpha/beta) production and signaling pathway. Interacts with host IFIH1/MDA5 and DHX58/LGP2 to inhibit the transduction pathway involved in the activation of IFN-beta promoter, thus protecting the virus against cell antiviral state. Blocks the type I interferon signaling pathway by interacting with host TYK2 and thereby inhibiting downstream STAT1 and STAT2 phosphorylation. Blocks the type I interferon signaling pathway by disrupting the RIG-I signaling pathway. Moderately affects the type II interferon signaling. Prevents PP1alpha/gamma-mediated dephosphorylation of host IFIH1/MDA5 and thus blocks its activation. This is Non-structural protein V (P/V) from Measles virus (strain IP-3-Ca) (MeV).